A 308-amino-acid chain; its full sequence is Probable GTP 3',8-cyclase (308 aa).

The Radical SAM core domain maps to 4–224 (RFGRPLEDLR…QIRKKHFRPR (221 aa)). Residue arginine 13 participates in GTP binding. Cysteine 20, cysteine 24, and cysteine 27 together coordinate [4Fe-4S] cluster. Lysine 60 is a GTP binding site. S-adenosyl-L-methionine is bound at residue glycine 64. GTP is bound at residue threonine 90. Serine 114 serves as a coordination point for S-adenosyl-L-methionine. Residue lysine 151 participates in GTP binding. [4Fe-4S] cluster-binding residues include cysteine 245 and cysteine 248. 250–252 (RIR) is a binding site for GTP. Cysteine 262 contacts [4Fe-4S] cluster.

This sequence belongs to the radical SAM superfamily. MoaA family. The cofactor is [4Fe-4S] cluster.

The catalysed reaction is GTP + AH2 + S-adenosyl-L-methionine = (8S)-3',8-cyclo-7,8-dihydroguanosine 5'-triphosphate + 5'-deoxyadenosine + L-methionine + A + H(+). It functions in the pathway cofactor biosynthesis; molybdopterin biosynthesis. In terms of biological role, catalyzes the cyclization of GTP to (8S)-3',8-cyclo-7,8-dihydroguanosine 5'-triphosphate. This chain is Probable GTP 3',8-cyclase, found in Saccharolobus islandicus (strain L.S.2.15 / Lassen #1) (Sulfolobus islandicus).